The chain runs to 377 residues: Chaperone protein DnaJ (377 aa).

The region spanning Asp-5–Gly-70 is the J domain. The CR-type zinc finger occupies Gly-134 to Thr-212. Zn(2+) is bound by residues Cys-147, Cys-150, Cys-164, Cys-167, Cys-186, Cys-189, Cys-200, and Cys-203. 4 CXXCXGXG motif repeats span residues Cys-147–Gly-154, Cys-164–Gly-171, Cys-186–Gly-193, and Cys-200–Gly-207.

The protein belongs to the DnaJ family. Homodimer. Requires Zn(2+) as cofactor.

It is found in the cytoplasm. In terms of biological role, participates actively in the response to hyperosmotic and heat shock by preventing the aggregation of stress-denatured proteins and by disaggregating proteins, also in an autonomous, DnaK-independent fashion. Unfolded proteins bind initially to DnaJ; upon interaction with the DnaJ-bound protein, DnaK hydrolyzes its bound ATP, resulting in the formation of a stable complex. GrpE releases ADP from DnaK; ATP binding to DnaK triggers the release of the substrate protein, thus completing the reaction cycle. Several rounds of ATP-dependent interactions between DnaJ, DnaK and GrpE are required for fully efficient folding. Also involved, together with DnaK and GrpE, in the DNA replication of plasmids through activation of initiation proteins. The sequence is that of Chaperone protein DnaJ from Actinobacillus succinogenes (strain ATCC 55618 / DSM 22257 / CCUG 43843 / 130Z).